A 501-amino-acid chain; its full sequence is MNAFKQREVWFAIGSQHLYGPQTLQQVKAHAEQVVDSLNREAGLPVKLVLKPLVTTPDEITALCRDANYQPQCIGILAWLHTFSPAKMWIAGLSVLHKPLLQFHTQFNAQVPWDSMDMDFMNLNQTAHGGREFGFIGARMRQQHSVIAGHWQDPEAHRRIGQWMRVASAKQAGQQLKVARFGDNMREVAVTDGDKVGAQIQFGYSVNAYGIGDLVSVINEVSRGDVDTLIEEYEASYVLSDAAKINGAKRENLTDAARIELGMKRFLEQGNFQAFTTNFEDLHGMKQLPGLAVQRLMQQGYGFGGEGDWKTAALLRILKVMADGLHGGTSFMEDYTYHFQPGNDLVVGSHMLEVCPSIAREPKPLLDIQPLGIGGKADPARLIFSTPAGPAVNASLIDMGDRFRLLVNQVDTVEQPHPLPKLPVARAIWRAQPTLATAAEAWILAGGAHHTVFSQALDADMLRLYAEMHNIEFLLIDQDTTLPAFKNELRWNEAYYQLNRR.

Residues glutamate 306, glutamate 333, histidine 350, and histidine 450 each coordinate Mn(2+).

The protein belongs to the arabinose isomerase family. Homohexamer. The cofactor is Mn(2+).

The catalysed reaction is beta-L-arabinopyranose = L-ribulose. It functions in the pathway carbohydrate degradation; L-arabinose degradation via L-ribulose; D-xylulose 5-phosphate from L-arabinose (bacterial route): step 1/3. Its function is as follows. Catalyzes the conversion of L-arabinose to L-ribulose. The protein is L-arabinose isomerase of Serratia proteamaculans (strain 568).